Consider the following 491-residue polypeptide: F-box protein At3g59000 (491 aa).

The 49-residue stretch at 1–49 folds into the F-box domain; it reads MDRVGSLPDELLSHILSFLTTKEAALTSLLSKRWRYLIAFVPNLAFDDI.

In terms of assembly, part of a SCF (ASK-cullin-F-box) protein ligase complex. Interacts with ASK4.

Its subcellular location is the nucleus. The protein operates within protein modification; protein ubiquitination. In terms of biological role, component of SCF(ASK-cullin-F-box) E3 ubiquitin ligase complexes, which may mediate the ubiquitination and subsequent proteasomal degradation of target proteins. This chain is F-box protein At3g59000, found in Arabidopsis thaliana (Mouse-ear cress).